Consider the following 134-residue polypeptide: Ribonuclease VapC2 (134 aa).

The 122-residue stretch at 3–124 (YMLDTNICVY…TNNIKEFKRI (122 aa)) folds into the PINc domain. Mg(2+) is bound at residue Asp6.

It belongs to the PINc/VapC protein family. Forms complexes with VapB2; probably VapC2(4):VapB2(2) in the absence of DNA, and VapC2(4):VapB2(4) in the presence of DNA. Crystallizes as heterodimers with stoichiometry VapC2(4):VapB2(4) in the presence of its probable promoter DNA. The heterodimers are in contact via alternative VapC-VapC and VapB-VapB interactions. This subunit does not contact DNA. The cofactor is Mg(2+).

Toxic component of a type II toxin-antitoxin (TA) system. Has ssRNase activity. Upon expression in E.coli or S.cerevisiae inhibits growth in liquid culture; in S.cerevisiae its expression leads to apoptosis-like characteristics. Rapidly induces apoptosis (within 2 hours) upon microinjection into mouse fibroblasts (L929 line); pretreatment of cells with dexamethasone protects them. Probably contributes to host cell death if bacterial cell lysis occurs during host infection. Its toxic effect is neutralized by coexpression with cognate antitoxin VapB2, its RNase activity is partially inhibited in vitro by VapB2. The protein is Ribonuclease VapC2 of Rickettsia felis (strain ATCC VR-1525 / URRWXCal2) (Rickettsia azadi).